We begin with the raw amino-acid sequence, 348 residues long: Ferredoxin--NADP reductase (348 aa).

FAD is bound by residues Thr26, Glu45, Gln53, Tyr58, Ala98, Phe133, Asp299, and Ser340.

This sequence belongs to the ferredoxin--NADP reductase type 2 family. Homodimer. FAD serves as cofactor.

The catalysed reaction is 2 reduced [2Fe-2S]-[ferredoxin] + NADP(+) + H(+) = 2 oxidized [2Fe-2S]-[ferredoxin] + NADPH. The chain is Ferredoxin--NADP reductase from Prosthecochloris aestuarii (strain DSM 271 / SK 413).